A 236-amino-acid chain; its full sequence is 2-C-methyl-D-erythritol 4-phosphate cytidylyltransferase (236 aa).

It belongs to the IspD/TarI cytidylyltransferase family. IspD subfamily. Homodimer.

The enzyme catalyses 2-C-methyl-D-erythritol 4-phosphate + CTP + H(+) = 4-CDP-2-C-methyl-D-erythritol + diphosphate. It functions in the pathway isoprenoid biosynthesis; isopentenyl diphosphate biosynthesis via DXP pathway; isopentenyl diphosphate from 1-deoxy-D-xylulose 5-phosphate: step 2/6. Its function is as follows. Catalyzes the formation of 4-diphosphocytidyl-2-C-methyl-D-erythritol from CTP and 2-C-methyl-D-erythritol 4-phosphate (MEP). In Shigella flexneri serotype 5b (strain 8401), this protein is 2-C-methyl-D-erythritol 4-phosphate cytidylyltransferase.